A 155-amino-acid chain; its full sequence is Lipoprotein signal peptidase (155 aa).

2 consecutive transmembrane segments (helical) span residues 52-72 (ILQG…AGIV) and 85-105 (LGVA…DRVF). Residues Asp111 and Asp129 contribute to the active site. The chain crosses the membrane as a helical span at residues 124–144 (IFNIADSSLCVGVILLFIQML).

It belongs to the peptidase A8 family.

It localises to the cell membrane. The enzyme catalyses Release of signal peptides from bacterial membrane prolipoproteins. Hydrolyzes -Xaa-Yaa-Zaa-|-(S,diacylglyceryl)Cys-, in which Xaa is hydrophobic (preferably Leu), and Yaa (Ala or Ser) and Zaa (Gly or Ala) have small, neutral side chains.. The protein operates within protein modification; lipoprotein biosynthesis (signal peptide cleavage). Its function is as follows. This protein specifically catalyzes the removal of signal peptides from prolipoproteins. This chain is Lipoprotein signal peptidase, found in Bacillus pumilus (strain SAFR-032).